Reading from the N-terminus, the 749-residue chain is Fibronectin type III and SPRY domain-containing protein 2 (749 aa).

Residues 205–317 (LNEALESAKD…TIEEMCHEEK (113 aa)) are a coiled coil. Fibronectin type-III domains lie at 375–470 (PVIN…TAPS) and 471–564 (PPII…TIGS). The B30.2/SPRY domain maps to 546–744 (NMGGPSVRSE…KVHNGISMPK (199 aa)).

As to quaternary structure, interacts with CMYA5. In cardiac muscles, identified in a complex composed of FSD2, CMYA5 and RYR2.

Its subcellular location is the nucleus. The protein resides in the sarcoplasmic reticulum. It is found in the cytoplasm. It localises to the perinuclear region. This is Fibronectin type III and SPRY domain-containing protein 2 (FSD2) from Homo sapiens (Human).